A 344-amino-acid chain; its full sequence is 2,3,4,5-tetrahydropyridine-2,6-dicarboxylate N-succinyltransferase (344 aa).

E205 lines the Mg(2+) pocket. The Acyl-anhydride intermediate role is filled by E221. Succinyl-CoA contacts are provided by residues R223, G238, S241, A264, 279 to 280 (EA), G287, K304, and 317 to 320 (RRNS).

It belongs to the type 2 tetrahydrodipicolinate N-succinyltransferase family. As to quaternary structure, homotrimer.

The protein resides in the cytoplasm. The enzyme catalyses (S)-2,3,4,5-tetrahydrodipicolinate + succinyl-CoA + H2O = (S)-2-succinylamino-6-oxoheptanedioate + CoA. It participates in amino-acid biosynthesis; L-lysine biosynthesis via DAP pathway; LL-2,6-diaminopimelate from (S)-tetrahydrodipicolinate (succinylase route): step 1/3. In terms of biological role, catalyzes the conversion of the cyclic tetrahydrodipicolinate (THDP) into the acyclic N-succinyl-L-2-amino-6-oxopimelate using succinyl-CoA. The chain is 2,3,4,5-tetrahydropyridine-2,6-dicarboxylate N-succinyltransferase from Pseudomonas putida (strain ATCC 47054 / DSM 6125 / CFBP 8728 / NCIMB 11950 / KT2440).